Reading from the N-terminus, the 325-residue chain is NAD kinase (325 aa).

The active-site Proton acceptor is aspartate 91. NAD(+)-binding positions include 91 to 92, histidine 96, 165 to 166, histidine 176, histidine 193, aspartate 195, and 206 to 211; these read DG, ND, and TAYALS.

Belongs to the NAD kinase family. A divalent metal cation serves as cofactor.

The protein localises to the cytoplasm. It carries out the reaction NAD(+) + ATP = ADP + NADP(+) + H(+). Its function is as follows. Involved in the regulation of the intracellular balance of NAD and NADP, and is a key enzyme in the biosynthesis of NADP. Catalyzes specifically the phosphorylation on 2'-hydroxyl of the adenosine moiety of NAD to yield NADP. In Psychrobacter arcticus (strain DSM 17307 / VKM B-2377 / 273-4), this protein is NAD kinase.